The following is a 63-amino-acid chain: MAKPIIPMPRSRFLRVKCIDCGNEQIVFSHPATKVRCLICGATLVEPTGGKGIVKAKILEVLE.

Residues cysteine 18, cysteine 21, cysteine 37, and cysteine 40 each contribute to the Zn(2+) site. A C4-type zinc finger spans residues 18–40 (CIDCGNEQIVFSHPATKVRCLIC).

It belongs to the eukaryotic ribosomal protein eS27 family. In terms of assembly, part of the 30S ribosomal subunit. The cofactor is Zn(2+).

In Pyrococcus furiosus (strain ATCC 43587 / DSM 3638 / JCM 8422 / Vc1), this protein is Small ribosomal subunit protein eS27.